The sequence spans 731 residues: Bifunctional trehalose-6-phosphate synthase/phosphatase (731 aa).

Residues 1–464 (MRLIVVSNRL…WGTDFIYSLI (464 aa)) form an alpha,alpha-trehalose-phosphate synthase region. Arg-9 contributes to the D-glucose 6-phosphate binding site. 25–26 (GG) contacts UDP-alpha-D-glucose. Residues Tyr-89 and Asp-143 each contribute to the D-glucose 6-phosphate site. UDP-alpha-D-glucose is bound by residues Arg-276 and Lys-281. Arg-314 provides a ligand contact to D-glucose 6-phosphate. UDP-alpha-D-glucose is bound at residue 379–383 (LVAKE). Residues 465-731 (SAKSAREEVE…RSLLEQLRPP (267 aa)) are trehalose-6-phosphate phosphatase. Asp-503 serves as the catalytic Nucleophile. The Mg(2+) site is built by Asp-503, Asp-505, and Asp-684. 503-505 (DYD) lines the alpha,alpha-trehalose 6-phosphate pocket.

The protein in the N-terminal section; belongs to the glycosyltransferase 20 family. It in the C-terminal section; belongs to the trehalose phosphatase family. As to quaternary structure, may interact with the putative glycosyltransferase (GT) TTX_1305. TTX_1305 is required for the trehalose-6-phosphate synthase activity of tpsp. It depends on Mg(2+) as a cofactor.

The catalysed reaction is D-glucose 6-phosphate + UDP-alpha-D-glucose = alpha,alpha-trehalose 6-phosphate + UDP + H(+). It carries out the reaction alpha,alpha-trehalose 6-phosphate + H2O = alpha,alpha-trehalose + phosphate. It participates in glycan biosynthesis; trehalose biosynthesis. In terms of biological role, bifunctional enzyme which catalyzes the transfer of glucose from UDP-alpha-D-glucose to glucose-6-phosphate to form trehalose-6-phosphate (Tre6P) and removes the phosphate from Tre6P to produce free trehalose. The protein is Bifunctional trehalose-6-phosphate synthase/phosphatase of Thermoproteus tenax (strain ATCC 35583 / DSM 2078 / JCM 9277 / NBRC 100435 / Kra 1).